A 443-amino-acid polypeptide reads, in one-letter code: Dynein regulatory complex protein 9 (443 aa).

2 disordered regions span residues Met1–Glu40 and Gly415–Lys443. In terms of domain architecture, IQ spans Glu393 to Lys422. Residues Gly415–Gly430 are compositionally biased toward basic and acidic residues. Residues Lys431 to Lys443 show a composition bias toward basic residues.

This sequence belongs to the DRC9 family. Component of the nexin-dynein regulatory complex (N-DRC). Interacts (via IQ domain) with CALM when calcium levels are low. Does not interact with CALM in the presence of Ca(2+). Interacts with the HSP70 proteins HSPA1L and HSPA8. May form a complex with CAMK4 and HSP70.

The protein resides in the cytoplasm. It localises to the cell projection. Its subcellular location is the cilium. The protein localises to the flagellum. It is found in the cytoskeleton. The protein resides in the flagellum axoneme. Its function is as follows. Component of the nexin-dynein regulatory complex (N-DRC), a key regulator of ciliary/flagellar motility which maintains the alignment and integrity of the distal axoneme and regulates microtubule sliding in motile axonemes. Binds calmodulin when cellular Ca(2+) levels are low and thereby contributes to the regulation of calcium and calmodulin-dependent protein kinase IV (CAMK4) activity; contributes to the regulation of CAMK4 signaling cascades. Required for normal axoneme assembly in sperm flagella, normal sperm tail formation and for male fertility. This is Dynein regulatory complex protein 9 (IQCG) from Macaca fascicularis (Crab-eating macaque).